The chain runs to 192 residues: UPF0149 protein VIBHAR_03551 (192 aa).

This sequence belongs to the UPF0149 family.

The protein is UPF0149 protein VIBHAR_03551 of Vibrio campbellii (strain ATCC BAA-1116).